Reading from the N-terminus, the 288-residue chain is Galactose/N-acetyl-D-galactosamine lectin light subunit 1 (288 aa).

An N-terminal signal peptide occupies residues M1–T15. N205 and N261 each carry an N-linked (GlcNAc...) asparagine glycan.

Heterodimer composed of a 170 kDa heavy subunit (hgl) and a 31/35 kDa light subunit (lgl); disulfide-linked.

It localises to the cell membrane. Its function is as follows. Light subunit of a heterodimeric lectin; the heavy subunit binds galactose and N-acetyl-D-galactosamine of host glycoproteins and thus mediates adhesion to host cells. This chain is Galactose/N-acetyl-D-galactosamine lectin light subunit 1, found in Entamoeba histolytica (strain ATCC 30459 / HM-1:IMSS / ABRM).